The primary structure comprises 464 residues: uncharacterized protein (464 aa).

2 disordered regions span residues 290 to 374 and 445 to 464; these read YRKQ…ERPK and ETDD…PLEE. Residues 293–302 are compositionally biased toward low complexity; sequence QQQWQQQQQQ. The span at 303 to 318 shows a compositional bias: basic residues; that stretch reads RKVKTPIKKQEAKKKA. The segment covering 352–367 has biased composition (polar residues); it reads DMKQQQQMEKGTTSKQ. Acidic residues predominate over residues 445–454; that stretch reads ETDDEDEENQ.

This is an uncharacterized protein from Macaca fascicularis (Crab-eating macaque).